Here is a 179-residue protein sequence, read N- to C-terminus: NADH dehydrogenase [ubiquinone] 1 beta subcomplex subunit 9 (179 aa).

Position 2 is an N-acetylalanine (A2). S85 carries the phosphoserine modification. Positions 139–160 (QLQEETPVGGPRTEALPPARKQ) are disordered.

Belongs to the complex I LYR family. Mammalian complex I is composed of 45 different subunits.

It is found in the mitochondrion inner membrane. In terms of biological role, accessory subunit of the mitochondrial membrane respiratory chain NADH dehydrogenase (Complex I), that is believed to be not involved in catalysis. Complex I functions in the transfer of electrons from NADH to the respiratory chain. The immediate electron acceptor for the enzyme is believed to be ubiquinone. The sequence is that of NADH dehydrogenase [ubiquinone] 1 beta subcomplex subunit 9 (NDUFB9) from Bos taurus (Bovine).